We begin with the raw amino-acid sequence, 455 residues long: UDP-glycosyltransferase 75B2 (455 aa).

Histidine 16 serves as the catalytic Proton acceptor. Histidine 16 is a binding site for an anthocyanidin. 7 residues coordinate UDP-alpha-D-glucose: glutamine 337, histidine 352, tryptophan 355, serine 357, glutamate 360, aspartate 376, and glutamine 377.

Belongs to the UDP-glycosyltransferase family.

It catalyses the reaction (indol-3-yl)acetate + UDP-alpha-D-glucose = 1-O-(indol-3-ylacetyl)-beta-D-glucose + UDP. It participates in plant hormone metabolism; auxin conjugation. In terms of biological role, possesses low catalytic activity in vitro. Also active as glucosyltransferase in vitro on benzoates and benzoate derivatives. The sequence is that of UDP-glycosyltransferase 75B2 (UGT75B2) from Arabidopsis thaliana (Mouse-ear cress).